Here is a 318-residue protein sequence, read N- to C-terminus: Chlorophyllase-2 (318 aa).

The short motif at 136–140 (GHSRG) is the GXSXG element. Catalysis depends on Ser-138, which acts as the Nucleophile. Residues Asp-167 and His-244 each act as charge relay system in the active site.

It belongs to the AB hydrolase superfamily. Lipase family. In terms of tissue distribution, expressed in leaves, flowers and flower buds, but not in roots.

The protein localises to the cytoplasm. The protein resides in the cytosol. The enzyme catalyses a chlorophyll + H2O = a chlorophyllide + phytol + H(+). The catalysed reaction is chlorophyll a + H2O = phytol + chlorophyllide a + H(+). It participates in porphyrin-containing compound metabolism; chlorophyll degradation. Catalyzes the hydrolysis of ester bond in chlorophyll to yield chlorophyllide and phytol. Does not seem to be required for chlorophyll degradation during senescence. The polypeptide is Chlorophyllase-2 (Arabidopsis thaliana (Mouse-ear cress)).